We begin with the raw amino-acid sequence, 342 residues long: tRNA dimethylallyltransferase (342 aa).

Position 39-46 (39-46 (GPTGSGKT)) interacts with ATP. 41-46 (TGSGKT) contacts substrate. Residues 64 to 67 (DSMQ) form an interaction with substrate tRNA region.

This sequence belongs to the IPP transferase family. Monomer. Mg(2+) serves as cofactor.

It carries out the reaction adenosine(37) in tRNA + dimethylallyl diphosphate = N(6)-dimethylallyladenosine(37) in tRNA + diphosphate. Functionally, catalyzes the transfer of a dimethylallyl group onto the adenine at position 37 in tRNAs that read codons beginning with uridine, leading to the formation of N6-(dimethylallyl)adenosine (i(6)A). The polypeptide is tRNA dimethylallyltransferase (Chlamydia pneumoniae (Chlamydophila pneumoniae)).